The chain runs to 166 residues: Protein C2-DOMAIN ABA-RELATED 11 (166 aa).

Methionine 1 carries the N-acetylmethionine modification. The 103-residue stretch at 1–103 (MGEPLGLLQV…ISVARLRHVV (103 aa)) folds into the C2 domain. Position 2 is an N-acetylglycine; in Protein C2-DOMAIN ABA-RELATED 11, N-terminally processed (glycine 2). Ca(2+) is bound by residues arginine 21, aspartate 22, aspartate 27, aspartate 73, lysine 74, aspartate 75, and aspartate 81.

It belongs to the plant CAR protein family. As to quaternary structure, binds to PYR/PYL/RCAR abscisic acid intracellular receptors in an ABA-independent manner, both at the plasma membrane and in the nucleus.

It is found in the cell membrane. It localises to the nucleus. Functionally, stimulates the GTPase/ATPase activities of Obg-like ATPases. Mediates the transient calcium-dependent interaction of PYR/PYL/RCAR abscisic acid (ABA) receptors with the plasma membrane and thus regulates ABA sensitivity. The polypeptide is Protein C2-DOMAIN ABA-RELATED 11 (Arabidopsis thaliana (Mouse-ear cress)).